A 64-amino-acid polypeptide reads, in one-letter code: Large ribosomal subunit protein bL35 (64 aa).

Belongs to the bacterial ribosomal protein bL35 family.

The protein is Large ribosomal subunit protein bL35 of Clavibacter michiganensis subsp. michiganensis (strain NCPPB 382).